Reading from the N-terminus, the 208-residue chain is Outer-membrane lipoprotein carrier protein (208 aa).

An N-terminal signal peptide occupies residues 1-22; sequence MKKIFTIAALSLPLFCHLPAMA.

This sequence belongs to the LolA family. As to quaternary structure, monomer.

The protein resides in the periplasm. Functionally, participates in the translocation of lipoproteins from the inner membrane to the outer membrane. Only forms a complex with a lipoprotein if the residue after the N-terminal Cys is not an aspartate (The Asp acts as a targeting signal to indicate that the lipoprotein should stay in the inner membrane). The protein is Outer-membrane lipoprotein carrier protein of Shewanella pealeana (strain ATCC 700345 / ANG-SQ1).